Here is a 108-residue protein sequence, read N- to C-terminus: uncharacterized protein (108 aa).

Helical transmembrane passes span 10-32 (SLCYFSVFIAPIIVPIVAYFVVN), 45-67 (ISHIVPFVGWLFLFIALLGGAVA), and 77-99 (FVIIGGAVIYFLVVIGIIIWNVI).

It is found in the cell membrane. This is an uncharacterized protein from Bacillus subtilis (strain 168).